Here is a 716-residue protein sequence, read N- to C-terminus: Segment polarity protein dishevelled homolog DVL-3 (716 aa).

Positions 1-82 (MGETKIIYHL…RVVSWLVSAE (82 aa)) constitute a DIX domain. R27 carries the omega-N-methylarginine modification. A phosphoserine mark is found at S48 and S125. Residues 85-235 (HPDPAPFCAD…VSRIERSSSF (151 aa)) form a disordered region. The segment covering 142 to 156 (QRERPRRRDGPEHAT) has biased composition (basic and acidic residues). Residues 175–190 (SSSTLMSSELETTSFF) are compositionally biased toward low complexity. Residue S192 is modified to Phosphoserine. Positions 199–212 (SRFSSSTEQSSASR) are enriched in low complexity. An Omega-N-methylarginine modification is found at R212. Residues 213 to 226 (LMRRHKRRRRKQKV) show a composition bias toward basic residues. Residues 249–321 (TVTLNMEKYN…NDDAVRVLRE (73 aa)) form the PDZ domain. An Asymmetric dimethylarginine; by PRMT1; alternate modification is found at R271. Residues R271 and R342 each carry the symmetric dimethylarginine; by PRMT7; alternate modification. R342 is modified (omega-N-methylarginine; alternate). T346 is subject to Phosphothreonine. The DEP domain maps to 422–496 (PESGLEVRDR…SEQCYYIFGD (75 aa)). The tract at residues 546-691 (PYNPHPGFPE…PPGRDLASVP (146 aa)) is disordered. The segment covering 565–581 (ASSQHSEGSRSSGSNRS) has biased composition (low complexity). Basic and acidic residues-rich tracts occupy residues 582–595 (GSDR…KAGD) and 604–622 (ESDH…RAPS). R614 bears the Symmetric dimethylarginine; by PRMT7 mark. Over residues 653–682 (YGPPGVPPLYGPPMLMMPPPPAAMGPPGAP) the composition is skewed to pro residues. Phosphoserine is present on S697. R698 is modified (omega-N-methylarginine; alternate). R698 is subject to Dimethylated arginine; alternate. A Phosphoserine modification is found at S700.

Belongs to the DSH family. Interacts (via the PDZ domain) with the C-terminal regions of VANGL1 and VANGL2. Interacts (via the region containing both the PDZ and DEP domains) with LRRFIP2; the DIX domain may inhibit this interaction. Interacts with CYLD, CEP164 and DAB2. Interacts with DCDC2. Interacts with FOXK1 and FOXK2. Interacts with DAAM2. Post-translationally, ubiquitinated. Deubiquitinated by CYLD, which acts on 'Lys-63'-linked ubiquitin chains. Phosphorylated by CSNK1D. In terms of processing, arginine methylation may function as a switch in regulation of function in Wnt signaling.

The protein localises to the cytoplasm. Functionally, involved in the signal transduction pathway mediated by multiple Wnt genes. This is Segment polarity protein dishevelled homolog DVL-3 (DVL3) from Homo sapiens (Human).